We begin with the raw amino-acid sequence, 565 residues long: Oxygen-dependent choline dehydrogenase (565 aa).

6 to 35 (DYIIVGAGSAGNTLATRLTEDAGVTVLLLE) is a binding site for FAD. H475 acts as the Proton acceptor in catalysis.

It belongs to the GMC oxidoreductase family. It depends on FAD as a cofactor.

The catalysed reaction is choline + A = betaine aldehyde + AH2. The enzyme catalyses betaine aldehyde + NAD(+) + H2O = glycine betaine + NADH + 2 H(+). Its pathway is amine and polyamine biosynthesis; betaine biosynthesis via choline pathway; betaine aldehyde from choline (cytochrome c reductase route): step 1/1. In terms of biological role, involved in the biosynthesis of the osmoprotectant glycine betaine. Catalyzes the oxidation of choline to betaine aldehyde and betaine aldehyde to glycine betaine at the same rate. This is Oxygen-dependent choline dehydrogenase from Pseudomonas putida (strain GB-1).